The following is a 367-amino-acid chain: Pre-small/secreted glycoprotein (367 aa).

The N-terminal stretch at methionine 1–serine 33 is a signal peptide. Asparagine 41 carries N-linked (GlcNAc...) asparagine; by host glycosylation. Disulfide bonds link cysteine 109/cysteine 136 and cysteine 122/cysteine 148. Asparagine 205, asparagine 239, asparagine 258, and asparagine 269 each carry an N-linked (GlcNAc...) asparagine; by host glycan.

This sequence belongs to the filoviruses glycoprotein family. In terms of assembly, homodimer; disulfide-linked. The homodimers are linked by two disulfide bonds in a parallel orientation. As to quaternary structure, monomer. This precursor is processed into mature sGP and delta-peptide by host furin or furin-like proteases. The cleavage site corresponds to the furin optimal cleavage sequence [KR]-X-[KR]-R. Post-translationally, N-glycosylated. In terms of processing, O-glycosylated.

It is found in the secreted. Seems to possess an anti-inflammatory activity as it can reverse the barrier-decreasing effects of TNF alpha. Might therefore contribute to the lack of inflammatory reaction seen during infection in spite the of extensive necrosis and massive virus production. Does not seem to be involved in activation of primary macrophages. Does not seem to interact specifically with neutrophils. In terms of biological role, viroporin that permeabilizes mammalian cell plasma membranes. It acts by altering permeation of ionic compounds and small molecules. This activity may lead to viral enterotoxic activity. The sequence is that of Pre-small/secreted glycoprotein (GP) from Reston ebolavirus (strain Siena/Philippine-92) (REBOV).